A 373-amino-acid polypeptide reads, in one-letter code: P2Y purinoceptor 2 (373 aa).

Topologically, residues 1–32 (MAADLEPWNSTINGTWEGDELGYKCRFNEDFK) are extracellular. Residues Asn-9 and Asn-13 are each glycosylated (N-linked (GlcNAc...) asparagine). A helical membrane pass occupies residues 33–59 (YVLLPVSYGVVCVLGLCLNVVALYIFL). Residues 60 to 70 (CRLKTWNASTT) lie on the Cytoplasmic side of the membrane. The helical transmembrane segment at 71–93 (YMFHLAVSDSLYAASLPLLVYYY) threads the bilayer. Residues 94 to 110 (ARGDHWPFSTVLCKLVR) lie on the Extracellular side of the membrane. The cysteines at positions 106 and 183 are disulfide-linked. A helical membrane pass occupies residues 111–129 (FLFYTNLYCSILFLTCISV). Over 130–152 (HRCLGVLRPLHSLRWGRARYARR) the chain is Cytoplasmic. A helical membrane pass occupies residues 153 to 172 (VAAVVWVLVLACQAPVLYFV). Residues 173–194 (TTSVRGTRITCHDTSARELFSH) are Extracellular-facing. Residues 195–220 (FVAYSSVMLGLLFAVPFSVILVCYVL) form a helical membrane-spanning segment. The Cytoplasmic portion of the chain corresponds to 221–246 (MARRLLKPAYGTTGGLPRAKRKSVRT). A helical membrane pass occupies residues 247–269 (IALVLAVFALCFLPFHVTRTLYY). The Extracellular portion of the chain corresponds to 270-287 (SFRSLDLSCHTLNAINMA). A helical transmembrane segment spans residues 288 to 309 (YKITRPLASANSCLDPVLYFLA). Residues 310–373 (GQRLVRFARD…AGSETKDIRL (64 aa)) are Cytoplasmic-facing. Residues 318–373 (RDAKPPTEPTPSPQARRKLGLHRPNRTVRKDLSVSSDDSRRTESTPAGSETKDIRL) are disordered. The segment covering 332-344 (ARRKLGLHRPNRT) has biased composition (basic residues). Residues 345–360 (VRKDLSVSSDDSRRTE) show a composition bias toward basic and acidic residues.

The protein belongs to the G-protein coupled receptor 1 family. Spleen, testis, kidney, liver, lung, heart and brain.

The protein localises to the cell membrane. Its function is as follows. Receptor for ATP and UTP coupled to G-proteins that activate a phosphatidylinositol-calcium second messenger system. The affinity range is UTP = ATP &gt; ATP-gamma-S &gt;&gt; 2-methylthio-ATP = ADP. This Mus musculus (Mouse) protein is P2Y purinoceptor 2 (P2ry2).